Reading from the N-terminus, the 437-residue chain is Methylenetetrahydrofolate--tRNA-(uracil-5-)-methyltransferase TrmFO (437 aa).

G10–G15 is a binding site for FAD.

Belongs to the MnmG family. TrmFO subfamily. FAD serves as cofactor.

It is found in the cytoplasm. The catalysed reaction is uridine(54) in tRNA + (6R)-5,10-methylene-5,6,7,8-tetrahydrofolate + NADH + H(+) = 5-methyluridine(54) in tRNA + (6S)-5,6,7,8-tetrahydrofolate + NAD(+). It carries out the reaction uridine(54) in tRNA + (6R)-5,10-methylene-5,6,7,8-tetrahydrofolate + NADPH + H(+) = 5-methyluridine(54) in tRNA + (6S)-5,6,7,8-tetrahydrofolate + NADP(+). Functionally, catalyzes the folate-dependent formation of 5-methyl-uridine at position 54 (M-5-U54) in all tRNAs. In Brevibacillus brevis (strain 47 / JCM 6285 / NBRC 100599), this protein is Methylenetetrahydrofolate--tRNA-(uracil-5-)-methyltransferase TrmFO.